The sequence spans 687 residues: A-kinase anchor protein 8 (687 aa).

Residues 1-195 (MEQSYGGYGA…FLRGRGQGRF (195 aa)) are interaction with MCM2. The interval 1 to 210 (MEQSYGGYGA…SSTFIRSDPF (210 aa)) is interaction with DPY30. The residue at position 72 (serine 72) is a Phosphoserine. Positions 104 to 124 (SKEGGRGGISSGGEGMQDRDS) are disordered. Arginine 109 is subject to Asymmetric dimethylarginine; alternate. An Omega-N-methylarginine; alternate modification is found at arginine 109. Positions 109–118 (RGGISSGGEG) are enriched in gly residues. Residues 109-201 (RGGISSGGEG…QGRFQDRSNS (93 aa)) are interaction with DDX5. The tract at residues 127 to 152 (RFQPYESYDSRPCMPEHTPYRPSYSY) is nuclear matrix targeting site. A disordered region spans residues 189-221 (GRGQGRFQDRSNSSTFIRSDPFMPPSASSEPLS). Position 199 is a phosphoserine (serine 199). Residues arginine 233 and arginine 277 each carry the omega-N-methylarginine modification. A disordered region spans residues 278 to 380 (SQTRIRDWPR…KQRRRDRMRD (103 aa)). Composition is skewed to basic and acidic residues over residues 281 to 295 (RIRD…ERFG) and 312 to 321 (PDAKLARADS). A Bipartite nuclear localization signal motif is present at residues 287 to 304 (RRRGFERFGPDNMGRKRK). Residue lysine 315 forms a Glycyl lysine isopeptide (Lys-Gly) (interchain with G-Cter in SUMO2) linkage. 3 positions are modified to phosphoserine: serine 321, serine 326, and serine 337. A compositionally biased stretch (acidic residues) spans 322–332 (EGDLSENDDGA). The span at 336–358 (RSGDEEFRGEDDLCDSRKQRGEK) shows a compositional bias: basic and acidic residues. The involved in chromatin-binding stretch occupies residues 385-448 (RIQFACSVCK…NKKIEKRRQE (64 aa)). 2 C2H2 AKAP95-type zinc fingers span residues 390-412 (CSVC…SKFH) and 479-502 (CLAC…SVDH). The tract at residues 523-565 (SVLNNKHIVKMLEKYLKGEDPFVNETADLETEGDENLGEEKET) is involved in condensin complex recruitment. A Phosphothreonine modification is found at threonine 553. Lysine 563 participates in a covalent cross-link: Glycyl lysine isopeptide (Lys-Gly) (interchain with G-Cter in SUMO2). The interval 568–585 (EVAAEVLAEVITAAVKAV) is RII-binding. The required for interaction with MYCBP stretch occupies residues 572–589 (EVLAEVITAAVKAVEGDG). Residues 606-687 (VDTAEAGSDS…DAEAKDTPTE (82 aa)) are disordered. A compositionally biased stretch (basic and acidic residues) spans 633–648 (RNMEDMARGEAAEARN). Residues 649 to 666 (EAAVPAAAAGSPVPVIAI) show a composition bias toward low complexity. Serine 659 is modified (phosphoserine).

It belongs to the AKAP95 family. In terms of assembly, binds to dimeric RII-alpha regulatory subunit of PKA during mitosis. Interacts (via C-terminus) with FIGN. Interacts with NCAPD2, CCND1, CCND3, MCM2, RPS6KA1, PDE4A, CASP3. Interacts with DDX5, CCNE1. Interacts with NFKB1; detetcted in the cytoplasm. Interacts with MYCBP; MYCBP is translocated to the nucleus and the interaction prevents the association of the PKA catalytic subunit leading to suppression of PKA activity. Interacts with DPY30; mediating AKAP8 association with at least the MLL4/WBP7 HMT complex. Interacts with HDAC3; increased during mitosis. Interacts with GJA1; in the nucleus and in the nuclear membrane; the nuclear association increases with progress of cell cycle G1, S and G2 phase and decreases in M phase. Phosphorylated on tyrosine residues probably by SRC subfamily protein kinases; multiple phosphorylation is leading to dissociation from nuclear structures implicated in chromatin structural changes. As to expression, widely expressed. The protein has been detected in liver, fibroblasts, granulosa, myoblast, lymphoma and Sertoli cells.

It is found in the nucleus matrix. The protein resides in the nucleus. Its subcellular location is the nucleolus. It localises to the cytoplasm. Its function is as follows. Anchoring protein that mediates the subcellular compartmentation of cAMP-dependent protein kinase (PKA type II). Acts as an anchor for a PKA-signaling complex onto mitotic chromosomes, which is required for maintenance of chromosomes in a condensed form throughout mitosis. Recruits condensin complex subunit NCAPD2 to chromosomes required for chromatin condensation; the function appears to be independent from PKA-anchoring. May help to deliver cyclin D/E to CDK4 to facilitate cell cycle progression. Required for cell cycle G2/M transition and histone deacetylation during mitosis. In mitotic cells recruits HDAC3 to the vicinity of chromatin leading to deacetylation and subsequent phosphorylation at 'Ser-10' of histone H3; in this function may act redundantly with AKAP8L. Involved in nuclear retention of RPS6KA1 upon ERK activation thus inducing cell proliferation. May be involved in regulation of DNA replication by acting as scaffold for MCM2. Enhances HMT activity of the KMT2 family MLL4/WBP7 complex and is involved in transcriptional regulation. In a teratocarcinoma cell line is involved in retinoic acid-mediated induction of developmental genes implicating H3 'Lys-4' methylation. May be involved in recruitment of active CASP3 to the nucleus in apoptotic cells. May act as a carrier protein of GJA1 for its transport to the nucleus. May play a repressive role in the regulation of rDNA transcription. Preferentially binds GC-rich DNA in vitro. In cells, associates with ribosomal RNA (rRNA) chromatin, preferentially with rRNA promoter and transcribed regions. Involved in modulation of Toll-like receptor signaling. Required for the cAMP-dependent suppression of TNF-alpha in early stages of LPS-induced macrophage activation; the function probably implicates targeting of PKA to NFKB1. The chain is A-kinase anchor protein 8 (Akap8) from Rattus norvegicus (Rat).